A 429-amino-acid chain; its full sequence is UDP-N-acetylglucosamine 1-carboxyvinyltransferase (429 aa).

Residue 22–23 (KN) coordinates phosphoenolpyruvate. Arg-102 serves as a coordination point for UDP-N-acetyl-alpha-D-glucosamine. The Proton donor role is filled by Cys-126. Cys-126 is modified (2-(S-cysteinyl)pyruvic acid O-phosphothioketal). Residues 131–135 (RPVDL), Asp-316, and Ile-338 contribute to the UDP-N-acetyl-alpha-D-glucosamine site.

It belongs to the EPSP synthase family. MurA subfamily.

It is found in the cytoplasm. It carries out the reaction phosphoenolpyruvate + UDP-N-acetyl-alpha-D-glucosamine = UDP-N-acetyl-3-O-(1-carboxyvinyl)-alpha-D-glucosamine + phosphate. It functions in the pathway cell wall biogenesis; peptidoglycan biosynthesis. Functionally, cell wall formation. Adds enolpyruvyl to UDP-N-acetylglucosamine. In Methylobacterium nodulans (strain LMG 21967 / CNCM I-2342 / ORS 2060), this protein is UDP-N-acetylglucosamine 1-carboxyvinyltransferase.